Reading from the N-terminus, the 211-residue chain is Large ribosomal subunit protein uL4 (211 aa).

The span at 41–53 (QAHSRQGTASTLT) shows a compositional bias: polar residues. The interval 41-85 (QAHSRQGTASTLTRAEVRGGGRKPYKQKGTGRARQGSIRTPLRPG) is disordered. The span at 60-71 (GGRKPYKQKGTG) shows a compositional bias: basic residues.

This sequence belongs to the universal ribosomal protein uL4 family. Part of the 50S ribosomal subunit.

In terms of biological role, one of the primary rRNA binding proteins, this protein initially binds near the 5'-end of the 23S rRNA. It is important during the early stages of 50S assembly. It makes multiple contacts with different domains of the 23S rRNA in the assembled 50S subunit and ribosome. Its function is as follows. Forms part of the polypeptide exit tunnel. The polypeptide is Large ribosomal subunit protein uL4 (Prochlorococcus marinus (strain SARG / CCMP1375 / SS120)).